Here is a 280-residue protein sequence, read N- to C-terminus: Dihydropteroate synthase (280 aa).

The region spanning 1 to 265 (MSPAPVQVMG…DVRASVDAIK (265 aa)) is the Pterin-binding domain. Asn-13 is a binding site for Mg(2+). (7,8-dihydropterin-6-yl)methyl diphosphate is bound by residues Asp-86, Asn-105, Asp-177, Lys-213, and 253 to 255 (RVH).

Belongs to the DHPS family. Homodimer. The cofactor is Mg(2+).

The catalysed reaction is (7,8-dihydropterin-6-yl)methyl diphosphate + 4-aminobenzoate = 7,8-dihydropteroate + diphosphate. It functions in the pathway cofactor biosynthesis; tetrahydrofolate biosynthesis; 7,8-dihydrofolate from 2-amino-4-hydroxy-6-hydroxymethyl-7,8-dihydropteridine diphosphate and 4-aminobenzoate: step 1/2. Catalyzes the condensation of para-aminobenzoate (pABA) with 6-hydroxymethyl-7,8-dihydropterin diphosphate (DHPt-PP) to form 7,8-dihydropteroate (H2Pte), the immediate precursor of folate derivatives. The chain is Dihydropteroate synthase (folP1) from Mycobacterium bovis (strain ATCC BAA-935 / AF2122/97).